A 318-amino-acid polypeptide reads, in one-letter code: Porphobilinogen deaminase (318 aa).

The residue at position 241 (cysteine 241) is an S-(dipyrrolylmethanemethyl)cysteine.

Belongs to the HMBS family. Monomer. Requires dipyrromethane as cofactor.

It catalyses the reaction 4 porphobilinogen + H2O = hydroxymethylbilane + 4 NH4(+). Its pathway is porphyrin-containing compound metabolism; protoporphyrin-IX biosynthesis; coproporphyrinogen-III from 5-aminolevulinate: step 2/4. In terms of biological role, tetrapolymerization of the monopyrrole PBG into the hydroxymethylbilane pre-uroporphyrinogen in several discrete steps. This is Porphobilinogen deaminase from Geobacter sp. (strain M21).